The primary structure comprises 383 residues: S-adenosylmethionine synthase (383 aa).

His15 contacts ATP. A Mg(2+)-binding site is contributed by Asp17. Residue Glu43 coordinates K(+). Glu56 and Gln99 together coordinate L-methionine. Residues 99 to 109 (QSPDINQGVDR) are flexible loop. Residues 164 to 166 (DAK), 230 to 231 (RF), Asp239, 245 to 246 (RK), Ala262, and Lys266 each bind ATP. Asp239 is an L-methionine binding site. Lys270 contributes to the L-methionine binding site.

The protein belongs to the AdoMet synthase family. In terms of assembly, homotetramer; dimer of dimers. Requires Mg(2+) as cofactor. It depends on K(+) as a cofactor.

The protein localises to the cytoplasm. The enzyme catalyses L-methionine + ATP + H2O = S-adenosyl-L-methionine + phosphate + diphosphate. It participates in amino-acid biosynthesis; S-adenosyl-L-methionine biosynthesis; S-adenosyl-L-methionine from L-methionine: step 1/1. Its function is as follows. Catalyzes the formation of S-adenosylmethionine (AdoMet) from methionine and ATP. The overall synthetic reaction is composed of two sequential steps, AdoMet formation and the subsequent tripolyphosphate hydrolysis which occurs prior to release of AdoMet from the enzyme. The polypeptide is S-adenosylmethionine synthase (Shewanella baltica (strain OS223)).